The primary structure comprises 355 residues: IGF-like family receptor 1 (355 aa).

A signal peptide spans 1 to 22; sequence MGPGRCLLTALLLLALAPPPEA. The Extracellular portion of the chain corresponds to 23-163; the sequence is SQYCGRLEYW…PQQAWPNFLP (141 aa). The disordered stretch occupies residues 120–147; that stretch reads KGHCPLTPGNPGAPSSQERSSPASSIAW. A compositionally biased stretch (low complexity) spans 132–144; it reads APSSQERSSPASS. Residues 164-184 form a helical membrane-spanning segment; that stretch reads LVVLVLLLTLAVIAILLFILL. At 185 to 355 the chain is on the cytoplasmic side; it reads WHLCWPKEKA…KLGSSGVCWA (171 aa).

It is found in the cell membrane. Its function is as follows. Probable cell membrane receptor for the IGF-like family proteins. Binds IGFL1 and IGFL3 with a higher affinity. May also bind IGFL2. This is IGF-like family receptor 1 (IGFLR1) from Homo sapiens (Human).